A 210-amino-acid chain; its full sequence is Adenylate kinase (210 aa).

Position 10–15 (10–15 (GSGKGT)) interacts with ATP. Positions 30–59 (STGDLFRANISNATPLGKEIKQIVENGQLV) are NMP. AMP is bound by residues Thr-31, Arg-36, 57–59 (QLV), 85–88 (GFPR), and Gln-92. The segment at 121 to 158 (GRRICQSCGGIFNIYTLPTKEKGICDLCKGSLYQRKDD) is LID. Residue Arg-122 participates in ATP binding. 2 residues coordinate Zn(2+): Cys-125 and Cys-128. An ATP-binding site is contributed by 131–132 (IF). Cys-145 and Cys-148 together coordinate Zn(2+). AMP-binding residues include Arg-155 and Arg-166. Lys-194 serves as a coordination point for ATP.

This sequence belongs to the adenylate kinase family. As to quaternary structure, monomer.

The protein localises to the cytoplasm. It carries out the reaction AMP + ATP = 2 ADP. It participates in purine metabolism; AMP biosynthesis via salvage pathway; AMP from ADP: step 1/1. Functionally, catalyzes the reversible transfer of the terminal phosphate group between ATP and AMP. Plays an important role in cellular energy homeostasis and in adenine nucleotide metabolism. The chain is Adenylate kinase from Borrelia turicatae (strain 91E135).